A 201-amino-acid chain; its full sequence is Large ribosomal subunit protein uL4 (201 aa).

The interval 43-69 is disordered; it reads TKAQKGRSDVSGGGAKPWKQKGSGRAR.

This sequence belongs to the universal ribosomal protein uL4 family. In terms of assembly, part of the 50S ribosomal subunit.

One of the primary rRNA binding proteins, this protein initially binds near the 5'-end of the 23S rRNA. It is important during the early stages of 50S assembly. It makes multiple contacts with different domains of the 23S rRNA in the assembled 50S subunit and ribosome. Its function is as follows. Forms part of the polypeptide exit tunnel. The chain is Large ribosomal subunit protein uL4 from Thioalkalivibrio sulfidiphilus (strain HL-EbGR7).